The chain runs to 186 residues: MAKQPEEWHYLNPEFDNTPLEEEEEEEIIWVSKSEIKRDAEALKKLGTELVELSAQELERVPLDEKLLASIKLAQKVQREARRRQIQYIGKLLRNVDEEPIRQALDKLKNRHNQQILVLHKLEDLRTRLIDGGNEVIEEVVALYPMADRQQLRTLIRNAKKEKEANKPPKSFRLLFQYLKDLSESA.

It belongs to the DarP family.

The protein resides in the cytoplasm. Its function is as follows. Member of a network of 50S ribosomal subunit biogenesis factors which assembles along the 30S-50S interface, preventing incorrect 23S rRNA structures from forming. Promotes peptidyl transferase center (PTC) maturation. This Proteus mirabilis (strain HI4320) protein is Dual-action ribosomal maturation protein DarP.